The chain runs to 389 residues: Succinate--CoA ligase [ADP-forming] subunit beta (389 aa).

An ATP-grasp domain is found at 9–244; the sequence is KEILRKYNVP…LDEEDANEIE (236 aa). ATP contacts are provided by residues lysine 46, 53–55, glutamate 99, alanine 102, and glutamate 107; that span reads GRG. Positions 199 and 213 each coordinate Mg(2+). Residues asparagine 264 and 321 to 323 each bind substrate; that span reads GIM.

This sequence belongs to the succinate/malate CoA ligase beta subunit family. As to quaternary structure, heterotetramer of two alpha and two beta subunits. It depends on Mg(2+) as a cofactor.

It catalyses the reaction succinate + ATP + CoA = succinyl-CoA + ADP + phosphate. The catalysed reaction is GTP + succinate + CoA = succinyl-CoA + GDP + phosphate. The protein operates within carbohydrate metabolism; tricarboxylic acid cycle; succinate from succinyl-CoA (ligase route): step 1/1. In terms of biological role, succinyl-CoA synthetase functions in the citric acid cycle (TCA), coupling the hydrolysis of succinyl-CoA to the synthesis of either ATP or GTP and thus represents the only step of substrate-level phosphorylation in the TCA. The beta subunit provides nucleotide specificity of the enzyme and binds the substrate succinate, while the binding sites for coenzyme A and phosphate are found in the alpha subunit. The chain is Succinate--CoA ligase [ADP-forming] subunit beta from Cupriavidus pinatubonensis (strain JMP 134 / LMG 1197) (Cupriavidus necator (strain JMP 134)).